Consider the following 494-residue polypeptide: Serine/threonine-protein kinase cst-1 (494 aa).

The interval 1 to 27 (MPPSTDSSRRNSEEGFSDGFKLDSSAL) is disordered. A Protein kinase domain is found at 35-286 (FDIVGKLGEG…ALRLCEHTFI (252 aa)). Residues 41 to 49 (LGEGSYGSV) and K64 contribute to the ATP site. The Proton acceptor role is filled by D154. Residues 364 to 413 (IPKSAYGSSRNNGSPRVQPPGHTASACDPSNNPPFAEEGTGPNFQIGTSE) form a disordered region. The segment covering 369-378 (YGSSRNNGSP) has biased composition (polar residues). The region spanning 443–490 (FEFLRNITLDELIRRKESLDSEMEEEIRELQRRYKTKRQPILDVIEIK) is the SARAH domain.

It belongs to the protein kinase superfamily. STE Ser/Thr protein kinase family. STE20 subfamily. Mg(2+) serves as cofactor. Proteolytically cleaved by caspase-3 during apoptosis which results in kinase activation.

It carries out the reaction L-seryl-[protein] + ATP = O-phospho-L-seryl-[protein] + ADP + H(+). The enzyme catalyses L-threonyl-[protein] + ATP = O-phospho-L-threonyl-[protein] + ADP + H(+). Its function is as follows. Serine/threonine-protein kinase which extends lifespan and delays tissue aging, probably by activating daf-16. This chain is Serine/threonine-protein kinase cst-1 (cst-1), found in Caenorhabditis briggsae.